Reading from the N-terminus, the 248-residue chain is 3-deoxy-manno-octulosonate cytidylyltransferase (248 aa).

This sequence belongs to the KdsB family.

It localises to the cytoplasm. The enzyme catalyses 3-deoxy-alpha-D-manno-oct-2-ulosonate + CTP = CMP-3-deoxy-beta-D-manno-octulosonate + diphosphate. It participates in nucleotide-sugar biosynthesis; CMP-3-deoxy-D-manno-octulosonate biosynthesis; CMP-3-deoxy-D-manno-octulosonate from 3-deoxy-D-manno-octulosonate and CTP: step 1/1. Its pathway is bacterial outer membrane biogenesis; lipopolysaccharide biosynthesis. In terms of biological role, activates KDO (a required 8-carbon sugar) for incorporation into bacterial lipopolysaccharide in Gram-negative bacteria. This is 3-deoxy-manno-octulosonate cytidylyltransferase from Escherichia coli O6:H1 (strain CFT073 / ATCC 700928 / UPEC).